Consider the following 1829-residue polypeptide: Afadin (1829 aa).

Positions 39–133 (FHGVMRFYFQ…GRFVLKNEND (95 aa)) constitute a Ras-associating 1 domain. Residues 129–196 (KNENDAIPAK…PSQGDDSENS (68 aa)) form a disordered region. Residues 146–186 (EKQEKEGVIQNFKRTLSKKEKKEKKKREKEALRQASDKEER) adopt a coiled-coil conformation. Positions 160–172 (TLSKKEKKEKKKR) are enriched in basic residues. Over residues 173–189 (EKEALRQASDKEERPSQ) the composition is skewed to basic and acidic residues. Phosphoserine occurs at positions 216, 246, and 256. The Ras-associating 2 domain maps to 246–348 (SGGTLRIYAD…LVFQLKRRPP (103 aa)). Over residues 356-371 (KKHVEGKPLKGKDRAD) the composition is skewed to basic and acidic residues. The segment at 356-377 (KKHVEGKPLKGKDRADGSGYGS) is disordered. Phosphoserine occurs at positions 391 and 424. Positions 441–507 (FGPGIQPHHC…KFVDPIQDHV (67 aa)) constitute an FHA domain. 5 positions are modified to phosphoserine: S512, S557, S562, S589, and S655. The segment at 539-595 (DIHSGTALPASRSTTRLDSDRVSSASSTAERGMVKPMIRLDQEQDYRRRESRTQDAA) is disordered. Residues 576-591 (IRLDQEQDYRRRESRT) are compositionally biased toward basic and acidic residues. In terms of domain architecture, Dilute spans 668-915 (NKMVSMMEGV…IENVVAVAEN (248 aa)). The 87-residue stretch at 1014-1100 (VITVTLKKQN…VVTLEVAKQG (87 aa)) folds into the PDZ domain. Phosphoserine occurs at positions 1090, 1114, 1133, 1147, 1150, 1179, 1180, 1189, and 1206. The segment at 1114–1230 (SPMMQRISDR…PRPEAYPIPT (117 aa)) is disordered. The segment covering 1120–1135 (ISDRRGSGKPRPKSEG) has biased composition (basic and acidic residues). Residues 1139 to 1150 (YNNSAQNGSPES) are compositionally biased toward polar residues. Residues 1159–1179 (SEPKKLPGDDRLMKNRADHRS) show a composition bias toward basic and acidic residues. The span at 1195 to 1217 (PYTSGTAAKITSVSTGNLCTEEQ) shows a compositional bias: polar residues. Phosphothreonine is present on residues T1218 and T1239. Phosphoserine is present on residues S1245 and S1282. Basic and acidic residues predominate over residues 1300 to 1309 (ESGMDRKCDS). Disordered stretches follow at residues 1300–1533 (ESGM…EKQQ) and 1574–1724 (RLQE…KTQV). Positions 1316-1325 (SSSVESSTSS) are enriched in low complexity. A compositionally biased stretch (polar residues) spans 1332-1344 (SSKSVTPASTLTK). S1335 carries the phosphoserine modification. T1337 carries the phosphothreonine modification. Residues 1371 to 1380 (LPPPPPPPPA) are compositionally biased toward pro residues. Over residues 1401–1412 (NQAAPQSAQVAA) the composition is skewed to low complexity. Residues 1413-1447 (AERKKREEHQRWYEKEKARLEEERERKRREQERKL) show a composition bias toward basic and acidic residues. Positions 1417–1454 (KREEHQRWYEKEKARLEEERERKRREQERKLGQMRTQS) form a coiled coil. Polar residues predominate over residues 1450–1464 (MRTQSLNPASFSPLA). A compositionally biased stretch (basic and acidic residues) spans 1494–1510 (TIERRDLQYITISKEEL). Residues S1506 and S1517 each carry the phosphoserine modification. The segment covering 1520-1533 (PWKRDAREKLEKQQ) has biased composition (basic and acidic residues). A coiled-coil region spans residues 1530–1564 (EKQQQMHIVDMLSKEIHELQNKGDRTAEESDRLRK). Over residues 1583–1594 (EDDDEEEDDDVD) the composition is skewed to acidic residues. The stretch at 1600-1672 (QRLEAERRAR…SRLEAERRRQ (73 aa)) forms a coiled coil. Residues 1602–1682 (LEAERRARLQ…HEEAARRLLE (81 aa)) show a composition bias toward basic and acidic residues. Residue S1701 is modified to Phosphoserine. A compositionally biased stretch (polar residues) spans 1715 to 1724 (RNASYLKTQV). The residue at position 1726 (S1726) is a Phosphoserine. Residues 1742-1829 (DEEENYVPAG…TELENELNTK (88 aa)) form a disordered region. The span at 1753-1764 (NSYSGSAGTTAG) shows a compositional bias: polar residues. Residues 1768-1781 (APRDTREKLSRSQD) show a composition bias toward basic and acidic residues. Phosphoserine occurs at positions 1779 and 1804. Over residues 1809–1829 (VSDKVKASRKLTELENELNTK) the composition is skewed to basic and acidic residues. Residue K1812 is modified to N6-acetyllysine.

Homodimer. Interacts with F-actin, nectin and NECTIN3. Essential for the association of nectin and E-cadherin. Isoform 2/s-afadin does not interact with F-actin. Interacts with ZO-1 and occludin, but probably in an indirect manner. Interacts with RIT1, RIT2, NRXN1 and BCR. Interacts with ADAM10; the interaction locks ADAM10 at adherens junctions following ADAM10 recruitment to adherens junctions by TSPAN33. In terms of tissue distribution, isoform 1 is widely expressed, including in heart, brain, spleen, lung, liver, skeletal muscle, kidney and testis. Isoform 2 is mainly expressed in the brain.

The protein localises to the cell junction. It is found in the adherens junction. Its function is as follows. Belongs to an adhesion system, probably together with the E-cadherin-catenin system, which plays a role in the organization of homotypic, interneuronal and heterotypic cell-cell adherens junctions (AJs). Nectin- and actin-filament-binding protein that connects nectin to the actin cytoskeleton. May play a key role in the organization of epithelial structures of the embryonic ectoderm. Essential for the organization of adherens junctions. The protein is Afadin of Rattus norvegicus (Rat).